The following is a 1315-amino-acid chain: Probable nucleoporin C890.06 (1315 aa).

Belongs to the non-repetitive/WGA-negative nucleoporin family.

Its subcellular location is the cytoplasm. It localises to the nucleus. The sequence is that of Probable nucleoporin C890.06 from Schizosaccharomyces pombe (strain 972 / ATCC 24843) (Fission yeast).